The sequence spans 134 residues: uncharacterized protein (134 aa).

2 helical membrane-spanning segments follow: residues 49-69 and 71-91; these read VAVP…SLDV and LSMT…LNKV.

It is found in the cell membrane. This is an uncharacterized protein from Mycobacterium tuberculosis (strain ATCC 25618 / H37Rv).